We begin with the raw amino-acid sequence, 439 residues long: UDP-N-acetylglucosamine--peptide N-acetylglucosaminyltransferase stabilizing protein GtfB (439 aa).

This sequence belongs to the GtfB family. As to quaternary structure, interacts with glycosyltransferase GtfA (Gtf2); probably forms a heterotetramer with 2 subunits each of GtfA and GtfB. Part of the accessory SecA2/SecY2 protein translocation apparatus.

It is found in the cell membrane. It functions in the pathway protein modification; protein glycosylation. Its function is as follows. Required for the polymorphic O-glycosylation of the serine-rich repeat protein Fap1. A stabilizing protein that is part of the accessory SecA2/SecY2 system specifically required to export Fap1, a serine-rich fimbrial adhesin encoded upstream in the same operon. The GtfA-GtfB (Gtf1-Gtf2 in this bacteria) complex adds GlcNAc from UDP-GlcNAc to Fap1, attaching the first sugar residue. Cannot use not UDP-Glc as substrate. Stabilizes the glycosylation activity of GtfA, causing it to partially localize to the cellular membrane where it is more protease resistant. The chain is UDP-N-acetylglucosamine--peptide N-acetylglucosaminyltransferase stabilizing protein GtfB from Streptococcus parasanguinis.